The sequence spans 133 residues: Ribosome-binding factor A (133 aa).

The protein belongs to the RbfA family. As to quaternary structure, monomer. Binds 30S ribosomal subunits, but not 50S ribosomal subunits or 70S ribosomes.

It is found in the cytoplasm. Its function is as follows. One of several proteins that assist in the late maturation steps of the functional core of the 30S ribosomal subunit. Associates with free 30S ribosomal subunits (but not with 30S subunits that are part of 70S ribosomes or polysomes). Required for efficient processing of 16S rRNA. May interact with the 5'-terminal helix region of 16S rRNA. The sequence is that of Ribosome-binding factor A from Pseudomonas fluorescens (strain Pf0-1).